The chain runs to 151 residues: Large ribosomal subunit protein bL17 (151 aa).

The segment at 118–151 (EAKQPPRKEKAKKPAPVQAEEASATPASEEKAQD) is disordered. Residues 131 to 144 (PAPVQAEEASATPA) are compositionally biased toward low complexity.

This sequence belongs to the bacterial ribosomal protein bL17 family. As to quaternary structure, part of the 50S ribosomal subunit. Contacts protein L32.

The protein is Large ribosomal subunit protein bL17 of Syntrophobacter fumaroxidans (strain DSM 10017 / MPOB).